The following is a 562-amino-acid chain: Zinc finger protein 579 (562 aa).

A compositionally biased stretch (pro residues) spans 1 to 11 (MDPQPPPPAQG). Positions 1–43 (MDPQPPPPAQGSPPHRGRGRGRGRGRGRGRGRGRGGAGAPRAP) are disordered. Positions 15–33 (HRGRGRGRGRGRGRGRGRG) are enriched in basic residues. C2H2-type zinc fingers lie at residues 44-66 (LPCPTCGRLFRFPYYLSRHRLSH), 72-94 (HACPLCPKAFRRPAHLSRHLRGH), and 100-123 (LRCAACPRTFPEPAQLRRHLAQEH). At Arg-92 the chain carries Omega-N-methylarginine. The interval 139–203 (TAEPSWGPQD…SESEEAEAGA (65 aa)) is disordered. Ser-194 and Ser-196 each carry phosphoserine. C2H2-type zinc fingers lie at residues 270–292 (HQCSICLKAFARPWSLSRHRLVH) and 298–320 (FVCPDCGLAFRLASYLRQHRRVH). The interval 327 to 379 (APLPAAGKKDDKASGARNSAKGPEGGEGAECGGASEGGEGQNGGDAAPARPPA) is disordered. A compositionally biased stretch (gly residues) spans 349-369 (PEGGEGAECGGASEGGEGQNG). 3 C2H2-type zinc fingers span residues 384–406 (FWCPECGKGFRRRAHLRQHGVTH), 412–434 (FQCVRCQREFKRLADLARHAQVH), and 441–463 (HPCPRCPRRFSRAYSLLRHQRCH). The tract at residues 477–562 (QAQAPTSPPP…HLRGLGGLAS (86 aa)) is disordered. 2 stretches are compositionally biased toward pro residues: residues 482-491 (TSPPPPPPPL) and 512-525 (PSPGTPPQSPPAPP). Position 483 is a phosphoserine (Ser-483).

It belongs to the krueppel C2H2-type zinc-finger protein family.

Its subcellular location is the nucleus. Its function is as follows. May be involved in transcriptional regulation. This is Zinc finger protein 579 (ZNF579) from Homo sapiens (Human).